A 409-amino-acid polypeptide reads, in one-letter code: Tyrosine--tRNA ligase (409 aa).

Tyrosine 35 is a binding site for L-tyrosine. The 'HIGH' region signature appears at 40–49 (CTAESLHVGS). L-tyrosine is bound by residues tyrosine 172 and glutamine 176. Residues 232 to 236 (KMGKT) carry the 'KMSKS' region motif. Lysine 235 contacts ATP. The S4 RNA-binding domain maps to 343-409 (ISILDLVILS…KKKHIKVELI (67 aa)).

Belongs to the class-I aminoacyl-tRNA synthetase family. TyrS type 1 subfamily. In terms of assembly, homodimer.

The protein resides in the cytoplasm. The enzyme catalyses tRNA(Tyr) + L-tyrosine + ATP = L-tyrosyl-tRNA(Tyr) + AMP + diphosphate + H(+). Catalyzes the attachment of tyrosine to tRNA(Tyr) in a two-step reaction: tyrosine is first activated by ATP to form Tyr-AMP and then transferred to the acceptor end of tRNA(Tyr). This chain is Tyrosine--tRNA ligase, found in Pelagibacter ubique (strain HTCC1062).